We begin with the raw amino-acid sequence, 207 residues long: Small ribosomal subunit protein uS4 (207 aa).

The tract at residues 22-54 (KSARRSISDKSKFESKPGQHGRTSGSRTSDFGL) is disordered. Over residues 27–38 (SISDKSKFESKP) the composition is skewed to basic and acidic residues. Positions 42-52 (GRTSGSRTSDF) are enriched in polar residues. Residues 97–157 (SRLDNVVYRM…EKSKKQLRII (61 aa)) enclose the S4 RNA-binding domain.

This sequence belongs to the universal ribosomal protein uS4 family. In terms of assembly, part of the 30S ribosomal subunit. Contacts protein S5. The interaction surface between S4 and S5 is involved in control of translational fidelity.

Its function is as follows. One of the primary rRNA binding proteins, it binds directly to 16S rRNA where it nucleates assembly of the body of the 30S subunit. In terms of biological role, with S5 and S12 plays an important role in translational accuracy. This Leptothrix cholodnii (strain ATCC 51168 / LMG 8142 / SP-6) (Leptothrix discophora (strain SP-6)) protein is Small ribosomal subunit protein uS4.